The following is a 161-amino-acid chain: Nucleotide-binding protein PFL_4775 (161 aa).

This sequence belongs to the YajQ family.

Functionally, nucleotide-binding protein. The chain is Nucleotide-binding protein PFL_4775 from Pseudomonas fluorescens (strain ATCC BAA-477 / NRRL B-23932 / Pf-5).